A 338-amino-acid polypeptide reads, in one-letter code: MESKTTQNGSEVVELTEFEKTQKKYQDFIATLPKSKGWRPDEILTQYGGHWWQECLLEGLFHAKDHFEARPTDFLVCSYPKTGTTWLKALTYAIVNRSRYDDAANPLLKRNPHEFVPYVEIDFAFYPTVDVLQDRKNPLFSTHIPNGLLPDSIVNSGCKMVYIWRDPKDTFISMWTFLHKEKSQEGQLASLEDSFDMFCKGLSVYGPYLDHVLGYWKAYQENPDRILFLRYETMRANPLPFVKRLAEFMGYGFTDEEEENGVAEKVVKLCSFETLKNLEANKGDKEREDRPAVYANSAYFRKGKVGDWANYLTPEMAARIDGLVEEKFKDTGLLQHDN.

81 to 86 (KTGTTW) provides a ligand contact to 3'-phosphoadenylyl sulfate. The active-site Proton acceptor is the H143. 3'-phosphoadenylyl sulfate is bound by residues R165, S173, Y231, and 301 to 303 (RKG).

Belongs to the sulfotransferase 1 family. Highly expressed in roots, stems and mature leaves. Low expression in young leaves and flowers. Barely detected in siliques.

It is found in the cytoplasm. It carries out the reaction (Z)-desulfoglucotropeolin + 3'-phosphoadenylyl sulfate = (Z)-glucotropeolin + adenosine 3',5'-bisphosphate + H(+). It catalyses the reaction (Z)-indolylmethyl desulfoglucosinolate + 3'-phosphoadenylyl sulfate = (Z)-glucobrassicin + adenosine 3',5'-bisphosphate + H(+). Its activity is regulated as follows. Inhibited by phosphoadenosine 5'-phosphate (PAP). Functionally, sulfotransferase that utilizes 3'-phospho-5'-adenylyl sulfate (PAPS) as sulfonate donor to catalyze the sulfate conjugation of desulfo-glucosinolates (dsGSs), the final step in the biosynthesis of the glucosinolate core structure. Substrate preference is desulfo-2-phenylethyl glucosinolate &gt; desulfo-indol-3-yl methyl glucosinolate &gt; desulfo-benzyl glucosinolate &gt; desulfo-6-methylthiohexyl glucosinolate &gt; desulfo-4-methylthiobutyl glucosinolate &gt; desulfo-3-methylthiopropyl glucosinolate &gt; desulfo-singrin &gt; desulfo-3-butenyl glucosinolate. This chain is Cytosolic sulfotransferase 16 (SOT16), found in Arabidopsis thaliana (Mouse-ear cress).